A 51-amino-acid chain; its full sequence is Large ribosomal subunit protein eL39 (51 aa).

This sequence belongs to the eukaryotic ribosomal protein eL39 family.

In Methanothermobacter thermautotrophicus (strain ATCC 29096 / DSM 1053 / JCM 10044 / NBRC 100330 / Delta H) (Methanobacterium thermoautotrophicum), this protein is Large ribosomal subunit protein eL39 (rpl39e).